A 335-amino-acid polypeptide reads, in one-letter code: NADH-quinone oxidoreductase subunit H (335 aa).

The next 8 membrane-spanning stretches (helical) occupy residues 11–31 (VIIS…AGAL), 81–101 (VIFT…FAVI), 114–134 (IGLL…LFAG), 154–174 (VSYE…VGSF), 187–207 (LWFI…GVAV), 238–258 (FFVG…TLFF), 270–290 (QLAF…FILL), and 309–329 (FCLP…LLNT).

Belongs to the complex I subunit 1 family. In terms of assembly, NDH-1 is composed of 13 different subunits. Subunits NuoA, H, J, K, L, M, N constitute the membrane sector of the complex.

It localises to the cell inner membrane. It catalyses the reaction a quinone + NADH + 5 H(+)(in) = a quinol + NAD(+) + 4 H(+)(out). Functionally, NDH-1 shuttles electrons from NADH, via FMN and iron-sulfur (Fe-S) centers, to quinones in the respiratory chain. The immediate electron acceptor for the enzyme in this species is believed to be ubiquinone. Couples the redox reaction to proton translocation (for every two electrons transferred, four hydrogen ions are translocated across the cytoplasmic membrane), and thus conserves the redox energy in a proton gradient. This subunit may bind ubiquinone. In Pseudomonas fluorescens (strain SBW25), this protein is NADH-quinone oxidoreductase subunit H.